The following is a 233-amino-acid chain: Pre-hexon-linking protein VIII (233 aa).

Residue threonine 64 is modified to Phosphothreonine; by host. A propeptide spanning residues 112-163 is cleaved from the precursor; it reads ARHSFRYKGRTEPYPSPAIKRVLIRGKGIQLNDEVTSPLGVRPDGVFQLGGS. Position 180 is a phosphoserine; by host (serine 180).

Belongs to the adenoviridae hexon-linking protein family. Interacts with the peripentonal hexons as well as the hexons in the facets. Part of a complex composed of the core-capsid bridging protein, the endosome lysis protein VI and the hexon-linking protein VIII; these interactions bridge the virus core to the capsid. In terms of processing, cleaved by the viral protease during virion maturation. May cause the middle segment to be shed from the capsid.

The protein localises to the virion. Its subcellular location is the host nucleus. In terms of biological role, structural component of the virion that acts as a cement protein on the capsid interior and which glue the peripentonal hexons and group-of-nine hexons together. The protein is Pre-hexon-linking protein VIII of Homo sapiens (Human).